Reading from the N-terminus, the 725-residue chain is ABC transporter G family member 19 (725 aa).

One can recognise an ABC transporter domain in the interval 73 to 325; that stretch reads LNFNNLQYDV…FSDFGRPIPE (253 aa). Residue 117 to 124 participates in ATP binding; sequence GASGAGKS. In terms of domain architecture, ABC transmembrane type-2 spans 419–629; it reads FETFILAKRY…PYEAVLINEF (211 aa). 7 consecutive transmembrane segments (helical) span residues 438 to 458, 473 to 493, 515 to 535, 537 to 557, 577 to 597, 606 to 626, and 698 to 718; these read LVGT…TVYW, LFAF…PVFI, ISHS…FSAI, FWTV…LLIY, IMLC…LSGF, FYWT…AVLI, and LWIT…ALLF.

This sequence belongs to the ABC transporter superfamily. ABCG family. Eye pigment precursor importer (TC 3.A.1.204) subfamily.

The protein resides in the vacuole membrane. Functionally, confers selective resistance to kanamycin. This is ABC transporter G family member 19 (ABCG19) from Arabidopsis thaliana (Mouse-ear cress).